A 121-amino-acid chain; its full sequence is Large ribosomal subunit protein uL18 (121 aa).

The protein belongs to the universal ribosomal protein uL18 family. In terms of assembly, part of the 50S ribosomal subunit; part of the 5S rRNA/L5/L18/L25 subcomplex. Contacts the 5S and 23S rRNAs.

Its function is as follows. This is one of the proteins that bind and probably mediate the attachment of the 5S RNA into the large ribosomal subunit, where it forms part of the central protuberance. The protein is Large ribosomal subunit protein uL18 of Methylibium petroleiphilum (strain ATCC BAA-1232 / LMG 22953 / PM1).